Consider the following 150-residue polypeptide: Flagellar assembly factor FliW (150 aa).

The protein belongs to the FliW family. In terms of assembly, interacts with translational regulator CsrA and flagellin(s).

It is found in the cytoplasm. Functionally, acts as an anti-CsrA protein, binds CsrA and prevents it from repressing translation of its target genes, one of which is flagellin. Binds to flagellin and participates in the assembly of the flagellum. This chain is Flagellar assembly factor FliW, found in Leptospira borgpetersenii serovar Hardjo-bovis (strain JB197).